Reading from the N-terminus, the 263-residue chain is Sepiapterin reductase (263 aa).

NADP(+) contacts are provided by residues 18–24, 46–47, and 73–74; these read GASRGFG, RT, and DL. Substrate is bound by residues 160 to 161 and Tyr-173; that span reads SL. An NADP(+)-binding site is contributed by Lys-177. Gly-202 provides a ligand contact to substrate. Residue 204-209 coordinates NADP(+); the sequence is LDTDMH. Asp-260 serves as a coordination point for substrate.

This sequence belongs to the sepiapterin reductase family. In terms of assembly, homodimer.

The protein localises to the cytoplasm. The enzyme catalyses L-erythro-7,8-dihydrobiopterin + NADP(+) = L-sepiapterin + NADPH + H(+). It catalyses the reaction (6R)-L-erythro-5,6,7,8-tetrahydrobiopterin + 2 NADP(+) = 6-pyruvoyl-5,6,7,8-tetrahydropterin + 2 NADPH + 2 H(+). Its function is as follows. Catalyzes the final one or two reductions in tetra-hydrobiopterin biosynthesis to form 5,6,7,8-tetrahydrobiopterin. The sequence is that of Sepiapterin reductase (spr) from Xenopus laevis (African clawed frog).